A 142-amino-acid chain; its full sequence is Ig heavy chain V region IR2 (142 aa).

An N-terminal signal peptide occupies residues 1 to 19 (MDLRLTYVFIVAILKGVLC). The 114-residue stretch at 20–133 (EVKLEESGGG…YSENWFVYWG (114 aa)) folds into the Ig-like domain.

The chain is Ig heavy chain V region IR2 from Rattus norvegicus (Rat).